We begin with the raw amino-acid sequence, 245 residues long: tRNA1(Val) (adenine(37)-N6)-methyltransferase (245 aa).

It belongs to the methyltransferase superfamily. tRNA (adenine-N(6)-)-methyltransferase family.

The protein resides in the cytoplasm. The catalysed reaction is adenosine(37) in tRNA1(Val) + S-adenosyl-L-methionine = N(6)-methyladenosine(37) in tRNA1(Val) + S-adenosyl-L-homocysteine + H(+). Its function is as follows. Specifically methylates the adenine in position 37 of tRNA(1)(Val) (anticodon cmo5UAC). The protein is tRNA1(Val) (adenine(37)-N6)-methyltransferase of Citrobacter koseri (strain ATCC BAA-895 / CDC 4225-83 / SGSC4696).